The primary structure comprises 173 residues: Ribosome maturation factor RimM (173 aa).

A PRC barrel domain is found at 98–170 (EGEFYWCDLI…IMTVSPTEGL (73 aa)).

The protein belongs to the RimM family. In terms of assembly, binds ribosomal protein uS19.

The protein localises to the cytoplasm. Its function is as follows. An accessory protein needed during the final step in the assembly of 30S ribosomal subunit, possibly for assembly of the head region. Essential for efficient processing of 16S rRNA. May be needed both before and after RbfA during the maturation of 16S rRNA. It has affinity for free ribosomal 30S subunits but not for 70S ribosomes. The sequence is that of Ribosome maturation factor RimM from Geobacter metallireducens (strain ATCC 53774 / DSM 7210 / GS-15).